A 29-amino-acid chain; its full sequence is Cyclotide vibi-C (29 aa).

Positions 1–29 form a cross-link, cyclopeptide (Gly-Asn); it reads GLPVCGETCAFGSCYTPGCSCSWPVCTRN. Cystine bridges form between Cys-5-Cys-19, Cys-9-Cys-21, and Cys-14-Cys-26.

Post-translationally, this is a cyclic peptide.

Its function is as follows. Probably participates in a plant defense mechanism. This chain is Cyclotide vibi-C, found in Viola biflora (Yellow wood violet).